A 195-amino-acid chain; its full sequence is MAFVLSLLMALVLVSYGPGGSLGCYLSQRLMLDAKENLKLLDRMNRLSPHSCLQDRKDFGLPQEMVEGDQLQKDQAFPVLYEMLQQSFNLFYTEHSSAAWDTTLLEQLCTGLQQQLDHLDTCRDQVMGEKDSELGNVDPIVTVKKYFQGIHDYLQEKGYSDCAWEIVRVEMMRALTVSTTLQKRLTKMGGDLNSP.

An N-terminal signal peptide occupies residues 1–23; the sequence is MAFVLSLLMALVLVSYGPGGSLG. Intrachain disulfides connect Cys24–Cys122 and Cys52–Cys162.

This sequence belongs to the alpha/beta interferon family. IFN-alphaII subfamily. In terms of tissue distribution, constitutively and exclusively expressed in the mononuclear cells of the extraembryonic trophectoderm.

It is found in the secreted. Functionally, paracrine hormone primarily responsible for maternal recognition of pregnancy. Interacts with endometrial receptors, probably type I interferon receptors, and blocks estrogen receptor expression, preventing the estrogen-induced increase in oxytocin receptor expression in the endometrium. This results in the suppression of the pulsatile endometrial release of the luteolytic hormone prostaglandin F2-alpha, hindering the regression of the corpus luteum (luteolysis) and therefore a return to ovarian cyclicity. This, and a possible direct effect of IFN-tau on prostaglandin synthesis, leads in turn to continued ovarian progesterone secretion, which stimulates the secretion by the endometrium of the nutrients required for the growth of the conceptus. In summary, displays particularly high antiviral and antiproliferative potency concurrently with particular weak cytotoxicity, high antiluteolytic activity and immunomodulatory properties. In contrast with other IFNs, IFN-tau is not virally inducible. The protein is Interferon tau-5 (IFNT5) of Ovis aries (Sheep).